Reading from the N-terminus, the 799-residue chain is Serine/threonine-protein kinase AfsK (799 aa).

The 256-residue stretch at 16–271 folds into the Protein kinase domain; sequence FEVLGRLGAG…QAQLAPHLFG (256 aa). ATP-binding positions include 22 to 30 and Lys44; that span reads LGAGGMGLV. Ser71 carries the post-translational modification Phosphoserine; by autocatalysis. Asp138 (proton acceptor) is an active-site residue. Residue Thr168 is modified to Phosphothreonine; by autocatalysis. 2 disordered regions span residues 295-343 and 393-426; these read RRNG…PAPP and LAAS…PAGW. Composition is skewed to pro residues over residues 325 to 343 and 411 to 421; these read HAPP…PAPP and VPAPAPAPPEA.

It belongs to the protein kinase superfamily. Ser/Thr protein kinase family. As to quaternary structure, interacts (via the N-terminal kinase domain) with KbpA; the interaction prevents autophosphorylation of AfsK. In terms of processing, autophosphorylated mainly on threonine residues. Some phosphorylation on serine residues. Autophosphorylation on Thr-168 is the major site enhancing kinase activity towards AfsR, and is regulated though interaction with KbpA.

It carries out the reaction L-seryl-[protein] + ATP = O-phospho-L-seryl-[protein] + ADP + H(+). It catalyses the reaction L-threonyl-[protein] + ATP = O-phospho-L-threonyl-[protein] + ADP + H(+). Its function is as follows. Involved in the regulation of secondary metabolism by phosphorylating, on both Ser and Thr, the AfsR global regulatory protein involved in the control of secondary metabolism. The protein is Serine/threonine-protein kinase AfsK (afsK) of Streptomyces coelicolor (strain ATCC BAA-471 / A3(2) / M145).